The primary structure comprises 390 residues: Probable tRNA pseudouridine synthase D 2 (390 aa).

Asp93 (nucleophile) is an active-site residue. Residues Tyr166–Pro353 enclose the TRUD domain.

Belongs to the pseudouridine synthase TruD family.

The catalysed reaction is uridine(13) in tRNA = pseudouridine(13) in tRNA. In terms of biological role, could be responsible for synthesis of pseudouridine from uracil-13 in transfer RNAs. This Methanococcus maripaludis (strain DSM 14266 / JCM 13030 / NBRC 101832 / S2 / LL) protein is Probable tRNA pseudouridine synthase D 2.